We begin with the raw amino-acid sequence, 1050 residues long: Ankyrin repeat domain-containing protein 27 (1050 aa).

The sufficient for GEF activity towards RAB21 stretch occupies residues 1–372 (MALYDEDLLK…RQGSLSAKPP (372 aa)). The 139-residue stretch at 233–371 (ASEDAAFNKI…IRQGSLSAKP (139 aa)) folds into the VPS9 domain. 6 ANK repeats span residues 396–426 (SPTDCLFKHIASGNQKEVERLLSQEDHDKDA), 462–491 (RGHTPLHVAALCGQASLIDLLVSKGAVVNA), 495–524 (HGATPLHLACQKGYQSVTLLLLHYKASAEV), 528–560 (NGNTPLHLACTYGHEDCVKALVYYDVESCRLDI), 564–593 (KGDTPLHIAARWGYQAIIETLLQNGASPEI), and 597–627 (LKETPLKCALNSKILSVMEAYHLSFERRQKS). A sufficient for interaction with VPS29 region spans residues 396-460 (SPTDCLFKHI…PSVVTPFSRD (65 aa)). The segment at 451–600 (PSVVTPFSRD…PEIQNRLKET (150 aa)) is interaction with RAB38. The tract at residues 451–730 (PSVVTPFSRD…APAQKRLAKV (280 aa)) is interaction with RAB32. The tract at residues 630–665 (APVQSLQRSVDSISQESSTSSFSSMSAGSRQEETKK) is disordered. Low complexity predominate over residues 638 to 658 (SVDSISQESSTSSFSSMSAGS). A required for interaction with VAMP7 region spans residues 658–707 (SRQEETKKDYREVEKLLRAVADGDLEMVRYLLEWTEEDLEDAEDTVSAVD). ANK repeat units follow at residues 668 to 698 (REVEKLLRAVADGDLEMVRYLLEWTEEDLED), 743 to 772 (DGSSPLYVAALHGRADLIPLLLKHGANAGA), 776 to 805 (DQAVPLHLACQQGHFQVVKCLLDSNAKPNK), 809 to 838 (SGNTPLIYACSGGHHEVVALLLQHGAAINT), and 842 to 871 (KGNTALHEAVIEKHVFVVELLLLHGASVQV). Residues 692–746 (TEEDLEDAEDTVSAVDPEFCHPLCQCPKCAPAQKRLAKVPASGLGVNVTSQDGSS) are sufficient for interaction with VPS29. A phosphoserine mark is found at serine 962 and serine 970. The disordered stretch occupies residues 987–1050 (PAQSGSHAAE…TPQEVSASRS (64 aa)). The segment covering 994-1007 (AAEKGNSDWPERPR) has biased composition (basic and acidic residues). Position 1023 is a phosphothreonine (threonine 1023). The span at 1040-1050 (STPQEVSASRS) shows a compositional bias: polar residues.

Interacts with RAB21 (GDP-bound form), VPS29, KIF5A, KIF5C, GOLGA4. Interacts with RAB32 (GTP-bound form), RAB38 (GTP-bound form), VAMP7. Interacts with low affinity with RAB5. ANKRD27:RAB32 heterodimers can homodimerize to form tetramers. Can interact with RAB38 or RAB32, VPS29 and VAMP7 simultaneously. A decreased interaction with RAB32 seen in the presence of SGSM2.

The protein localises to the early endosome. It is found in the late endosome. Its subcellular location is the cytoplasmic vesicle membrane. The protein resides in the lysosome. It localises to the cell membrane. The protein localises to the melanosome. May be a guanine exchange factor (GEF) for Rab21, Rab32 and Rab38 and regulate endosome dynamics. May regulate the participation of VAMP7 in membrane fusion events; in vitro inhibits VAMP7-mediated SNARE complex formation by trapping VAMP7 in a closed, fusogenically inactive conformation. Involved in peripheral melanosomal distribution of TYRP1 in melanocytes; the function, which probably is implicating vesicle-trafficking, includes cooperation with Rab32, Rab38 and VAMP7. Involved in the regulation of neurite growth; the function seems to require its GEF activity, probably towards Rab21, and VAMP7 but not Rab32/38. Proposed to be involved in Golgi sorting of VAMP7 and transport of VAMP7 vesicles to the cell surface; the function seems to implicate kinesin heavy chain isoform 5 proteins, GOLGA4, RAB21 and MACF1. Required for the colocalization of VAMP7 and Rab21, probably on TGN sites. Involved in GLUT1 endosome-to-plasma membrane trafficking; the function is dependent of association with VPS29. Regulates the proper trafficking of melanogenic enzymes TYR, TYRP1 and DCT/TYRP2 to melanosomes in melanocytes. The sequence is that of Ankyrin repeat domain-containing protein 27 (ANKRD27) from Pongo abelii (Sumatran orangutan).